The following is a 318-amino-acid chain: Aspartate carbamoyltransferase catalytic subunit (318 aa).

Residues arginine 59 and threonine 60 each contribute to the carbamoyl phosphate site. Residue lysine 87 participates in L-aspartate binding. Positions 109, 137, and 140 each coordinate carbamoyl phosphate. L-aspartate-binding residues include arginine 170 and arginine 224. Carbamoyl phosphate-binding residues include glycine 265 and proline 266.

The protein belongs to the aspartate/ornithine carbamoyltransferase superfamily. ATCase family. As to quaternary structure, heterododecamer (2C3:3R2) of six catalytic PyrB chains organized as two trimers (C3), and six regulatory PyrI chains organized as three dimers (R2).

The enzyme catalyses carbamoyl phosphate + L-aspartate = N-carbamoyl-L-aspartate + phosphate + H(+). Its pathway is pyrimidine metabolism; UMP biosynthesis via de novo pathway; (S)-dihydroorotate from bicarbonate: step 2/3. Functionally, catalyzes the condensation of carbamoyl phosphate and aspartate to form carbamoyl aspartate and inorganic phosphate, the committed step in the de novo pyrimidine nucleotide biosynthesis pathway. This is Aspartate carbamoyltransferase catalytic subunit from Allorhizobium ampelinum (strain ATCC BAA-846 / DSM 112012 / S4) (Agrobacterium vitis (strain S4)).